We begin with the raw amino-acid sequence, 151 residues long: Phosphopantetheine adenylyltransferase (151 aa).

Residue Thr9 coordinates substrate. ATP-binding positions include 9–10 (TF) and His17. Substrate-binding residues include Lys41, Thr73, and Arg87. Residues 88 to 90 (GIR), Glu98, and 122 to 128 (LTCVSST) each bind ATP.

Belongs to the bacterial CoaD family. Homohexamer. Requires Mg(2+) as cofactor.

The protein resides in the cytoplasm. It carries out the reaction (R)-4'-phosphopantetheine + ATP + H(+) = 3'-dephospho-CoA + diphosphate. It participates in cofactor biosynthesis; coenzyme A biosynthesis; CoA from (R)-pantothenate: step 4/5. Reversibly transfers an adenylyl group from ATP to 4'-phosphopantetheine, yielding dephospho-CoA (dPCoA) and pyrophosphate. This is Phosphopantetheine adenylyltransferase from Bacteroides thetaiotaomicron (strain ATCC 29148 / DSM 2079 / JCM 5827 / CCUG 10774 / NCTC 10582 / VPI-5482 / E50).